Consider the following 1347-residue polypeptide: Probable serine/threonine-protein kinase DDB_G0288147 (1347 aa).

Residues 12–67 (NHRFEPYTLKHLTICKRCEKEIIGVSNSAQICYSCKNIYHTRCCKEIETKKLELIC) form a Phorbol-ester/DAG-type zinc finger. 3 disordered regions span residues 262-316 (PFNE…LNES), 333-402 (SNNS…KSSK), and 463-485 (DNNNNNNNNNNNNNNNSNNNNNN). Residues 271–282 (DSTLSASTYNRR) show a composition bias toward polar residues. 3 stretches are compositionally biased toward low complexity: residues 286–316 (KNKNSNKNNTSSSSSAPASASSSKHSNLNES), 333–342 (SNNSNNLAAL), and 350–361 (TTTTTTTTTTTT). Basic residues-rich tracts occupy residues 366-382 (NNHHHHQHHHQNSKSRK) and 389-402 (NKKKIKSPKNKSSK). A compositionally biased stretch (low complexity) spans 464 to 485 (NNNNNNNNNNNNNNNSNNNNNN). A Protein kinase domain is found at 599–854 (VKINVEIYDS…EILKVFYSLL (256 aa)). ATP contacts are provided by residues 605–613 (IYDSPLCTV) and K626. D724 (proton acceptor) is an active-site residue. 2 disordered regions span residues 937–1241 (SERK…IVNP) and 1282–1310 (SSDSSNSLSDPESEEYSMPIKRSSSIRSP). Positions 976–986 (IIDDDDDDDDD) are enriched in acidic residues. 2 stretches are compositionally biased toward low complexity: residues 1004 to 1015 (NINSENKNNNNV) and 1024 to 1062 (SSNSNNNNNNNNNNNNNNNNNNNNNNNNNNSNNNNNNNN). Composition is skewed to polar residues over residues 1063-1083 (LRQNQFLGNDLNKSQDNNQLM) and 1118-1127 (LSSSQTSEIG). Composition is skewed to low complexity over residues 1128 to 1241 (DNNT…IVNP) and 1282 to 1291 (SSDSSNSLSD).

The protein belongs to the protein kinase superfamily. TKL Ser/Thr protein kinase family.

The catalysed reaction is L-seryl-[protein] + ATP = O-phospho-L-seryl-[protein] + ADP + H(+). It catalyses the reaction L-threonyl-[protein] + ATP = O-phospho-L-threonyl-[protein] + ADP + H(+). The sequence is that of Probable serine/threonine-protein kinase DDB_G0288147 from Dictyostelium discoideum (Social amoeba).